A 1023-amino-acid chain; its full sequence is Lon protease homolog (1023 aa).

515–522 (GPPGVGKT) serves as a coordination point for ATP. The region spanning 810–1003 (TNMIGVINGL…IEIITDPNVI (194 aa)) is the Lon proteolytic domain. Ser-906 is a catalytic residue.

Belongs to the peptidase S16 family.

The chain is Lon protease homolog from Acanthamoeba polyphaga (Amoeba).